A 97-amino-acid polypeptide reads, in one-letter code: UPF0125 protein plu3376 (97 aa).

The protein belongs to the UPF0125 (RnfH) family.

The protein is UPF0125 protein plu3376 of Photorhabdus laumondii subsp. laumondii (strain DSM 15139 / CIP 105565 / TT01) (Photorhabdus luminescens subsp. laumondii).